The sequence spans 196 residues: [1-hydroxy-2-(trimethylamino)ethyl]phosphonate dioxygenase (glycine-betaine-forming) (196 aa).

Tyrosine 30 lines the [(1R)-1-hydroxy-2-(trimethylamino)ethyl]phosphonate pocket. Residues tyrosine 30, histidine 40, histidine 64, and aspartate 65 each contribute to the Fe cation site. Residues 37–156 (MAEHMLQGAT…VAEFEKNPNL (120 aa)) form the HD domain. [(1R)-1-hydroxy-2-(trimethylamino)ethyl]phosphonate is bound by residues histidine 68, histidine 86, histidine 109, lysine 113, serine 131, serine 134, and arginine 163. Fe cation is bound by residues histidine 86 and histidine 109. Residue aspartate 166 coordinates Fe cation.

The cofactor is Fe cation.

The enzyme catalyses [(1R)-1-hydroxy-2-(trimethylamino)ethyl]phosphonate + O2 = glycine betaine + phosphate + 2 H(+). Its function is as follows. Involved in the degradation of the naturally occurring organophosphonate 2-(trimethylammonio)ethylphosphonate (TMAEP). Catalyzes the O(2)-dependent cleavage of (R)-1-hydroxy-2-(trimethylammonio)ethylphosphonate (OH-TMAEP) to yield glycine betaine and phosphate. Is highly specific for its N-trimethylated substrate. In Leisingera caerulea (Phaeobacter caeruleus), this protein is [1-hydroxy-2-(trimethylamino)ethyl]phosphonate dioxygenase (glycine-betaine-forming).